The chain runs to 369 residues: Tyrosine-protein phosphatase non-receptor type 5 (369 aa).

Ser-49 carries the phosphoserine; by PKA modification. Thr-59 is modified (phosphothreonine; by MAPK). Ser-72 carries the phosphoserine; by MAPK modification. The Tyrosine-protein phosphatase domain occupies 104–359 (LQAEFFEIPM…QFVHHAMSLY (256 aa)). Residues Asp-265, 300–306 (CSAGIGR), and Gln-344 each bind substrate. Catalysis depends on Cys-300, which acts as the Phosphocysteine intermediate.

This sequence belongs to the protein-tyrosine phosphatase family. Non-receptor class subfamily. Post-translationally, phosphorylation at Ser-49 by PKA deactivates PTPN5. Phosphorylation at Thr-59 and Ser-72 by MAPKs stabilizes the phosphatase, dephosphorylation of these sites results in ubiquitin-mediated degradation of the active phosphatase. As to expression, expressed in the central nervous system except in the cerebellum. Enriched within the striatum relative to other brain areas.

Its subcellular location is the cytoplasm. It catalyses the reaction O-phospho-L-tyrosyl-[protein] + H2O = L-tyrosyl-[protein] + phosphate. In terms of biological role, may regulate the activity of several effector molecules involved in synaptic plasticity and neuronal cell survival, including MAPKs, Src family kinases and NMDA receptors. The polypeptide is Tyrosine-protein phosphatase non-receptor type 5 (Ptpn5) (Rattus norvegicus (Rat)).